A 373-amino-acid polypeptide reads, in one-letter code: Chaperone protein DnaJ (373 aa).

Residues 5–71 form the J domain; sequence DYYEILGVSR…EKRAMYDKFG (67 aa). Residues 144–226 form a CR-type zinc finger; sequence GVKIPLEYDR…CGGTGRIRKR (83 aa). Cys-157, Cys-160, Cys-174, Cys-177, Cys-200, Cys-203, Cys-214, and Cys-217 together coordinate Zn(2+). CXXCXGXG motif repeat units follow at residues 157–164, 174–181, 200–207, and 214–221; these read CEHCHGEG, CPKCHGTG, CNQCGGTG, and CRVCGGTG.

The protein belongs to the DnaJ family. As to quaternary structure, homodimer. Zn(2+) is required as a cofactor.

The protein resides in the cytoplasm. Functionally, participates actively in the response to hyperosmotic and heat shock by preventing the aggregation of stress-denatured proteins and by disaggregating proteins, also in an autonomous, DnaK-independent fashion. Unfolded proteins bind initially to DnaJ; upon interaction with the DnaJ-bound protein, DnaK hydrolyzes its bound ATP, resulting in the formation of a stable complex. GrpE releases ADP from DnaK; ATP binding to DnaK triggers the release of the substrate protein, thus completing the reaction cycle. Several rounds of ATP-dependent interactions between DnaJ, DnaK and GrpE are required for fully efficient folding. Also involved, together with DnaK and GrpE, in the DNA replication of plasmids through activation of initiation proteins. The chain is Chaperone protein DnaJ from Thermosipho melanesiensis (strain DSM 12029 / CIP 104789 / BI429).